Consider the following 325-residue polypeptide: Heat-inducible transcription repressor HrcA (325 aa).

The protein belongs to the HrcA family.

Its function is as follows. Negative regulator of class I heat shock genes (grpE-dnaK-dnaJ and groELS operons). Prevents heat-shock induction of these operons. The sequence is that of Heat-inducible transcription repressor HrcA from Staphylococcus epidermidis (strain ATCC 35984 / DSM 28319 / BCRC 17069 / CCUG 31568 / BM 3577 / RP62A).